Here is an 83-residue protein sequence, read N- to C-terminus: Cell division protein ZapB (83 aa).

Residues Glu-7–Asp-80 adopt a coiled-coil conformation.

Belongs to the ZapB family. In terms of assembly, homodimer. The ends of the coiled-coil dimer bind to each other, forming polymers. Interacts with FtsZ.

It localises to the cytoplasm. Non-essential, abundant cell division factor that is required for proper Z-ring formation. It is recruited early to the divisome by direct interaction with FtsZ, stimulating Z-ring assembly and thereby promoting cell division earlier in the cell cycle. Its recruitment to the Z-ring requires functional FtsA or ZipA. This chain is Cell division protein ZapB, found in Photobacterium profundum (strain SS9).